Here is a 213-residue protein sequence, read N- to C-terminus: Thiamine-phosphate synthase (213 aa).

4-amino-2-methyl-5-(diphosphooxymethyl)pyrimidine-binding positions include 38–42 (QLREK) and N73. Mg(2+) is bound by residues D74 and D93. Residue S111 coordinates 4-amino-2-methyl-5-(diphosphooxymethyl)pyrimidine. Residue 137 to 139 (TTS) coordinates 2-[(2R,5Z)-2-carboxy-4-methylthiazol-5(2H)-ylidene]ethyl phosphate. Residue K140 participates in 4-amino-2-methyl-5-(diphosphooxymethyl)pyrimidine binding. 2-[(2R,5Z)-2-carboxy-4-methylthiazol-5(2H)-ylidene]ethyl phosphate is bound by residues G169 and 189 to 190 (IS).

Belongs to the thiamine-phosphate synthase family. The cofactor is Mg(2+).

It carries out the reaction 2-[(2R,5Z)-2-carboxy-4-methylthiazol-5(2H)-ylidene]ethyl phosphate + 4-amino-2-methyl-5-(diphosphooxymethyl)pyrimidine + 2 H(+) = thiamine phosphate + CO2 + diphosphate. The enzyme catalyses 2-(2-carboxy-4-methylthiazol-5-yl)ethyl phosphate + 4-amino-2-methyl-5-(diphosphooxymethyl)pyrimidine + 2 H(+) = thiamine phosphate + CO2 + diphosphate. The catalysed reaction is 4-methyl-5-(2-phosphooxyethyl)-thiazole + 4-amino-2-methyl-5-(diphosphooxymethyl)pyrimidine + H(+) = thiamine phosphate + diphosphate. It functions in the pathway cofactor biosynthesis; thiamine diphosphate biosynthesis; thiamine phosphate from 4-amino-2-methyl-5-diphosphomethylpyrimidine and 4-methyl-5-(2-phosphoethyl)-thiazole: step 1/1. Functionally, condenses 4-methyl-5-(beta-hydroxyethyl)thiazole monophosphate (THZ-P) and 2-methyl-4-amino-5-hydroxymethyl pyrimidine pyrophosphate (HMP-PP) to form thiamine monophosphate (TMP). In Lysinibacillus sphaericus (strain C3-41), this protein is Thiamine-phosphate synthase.